A 170-amino-acid polypeptide reads, in one-letter code: CASP-like protein 2D1 (170 aa).

Over methionine 1–leucine 4 the chain is Cytoplasmic. Residues leucine 5–valine 25 form a helical membrane-spanning segment. Residues threonine 26–tyrosine 47 lie on the Extracellular side of the membrane. The helical transmembrane segment at methionine 48–isoleucine 68 threads the bilayer. Residues arginine 69–glutamine 83 are Cytoplasmic-facing. The helical transmembrane segment at isoleucine 84–tyrosine 104 threads the bilayer. Residues asparagine 105–lysine 127 are Extracellular-facing. The chain crosses the membrane as a helical span at residues leucine 128 to alanine 148. Residues tyrosine 149 to alanine 170 lie on the Cytoplasmic side of the membrane.

Belongs to the Casparian strip membrane proteins (CASP) family. Homodimer and heterodimers.

The protein localises to the cell membrane. This chain is CASP-like protein 2D1, found in Populus trichocarpa (Western balsam poplar).